Consider the following 944-residue polypeptide: Proline and serine-rich protein 1 (944 aa).

An N-acetylmethionine modification is found at methionine 1. Disordered regions lie at residues 233 to 285, 369 to 396, 608 to 633, and 912 to 944; these read PPPY…PVPT, PGPS…SEAF, KTEP…HGTL, and ESYP…SGWQ. Positions 248–274 are enriched in polar residues; it reads LSNPSKPIQNQTFSTPASQLFSPHGSN. A compositionally biased stretch (low complexity) spans 275–285; the sequence is PSTPAATPVPT. A compositionally biased stretch (polar residues) spans 932–944; the sequence is FSLQPSLSQSGWQ.

In terms of assembly, interacts with TET2 and OGT; this interaction mediates TET2 O-GlcNAcylation and stability by promoting the interaction between OGT and TET2. Interacts with KDM6A. Interacts with TET1. Glycosylated. Interaction with OGT leads to GlcNAcylation.

Mediates OGT interaction with and O-GlcNAcylation of TET2 to control TET2 stabilization at enhancers and CpG islands (CGIs). This Homo sapiens (Human) protein is Proline and serine-rich protein 1.